Reading from the N-terminus, the 217-residue chain is MASLKSIIRQGKQTRSDLKQLRKSGKVPAVVYGYGTKNVSVKVDEVEFIKVIREVCRNGVIELGVGSKTIKVMVADYQFDPLKNQITHIDFLAINMSEERTVEVPVQLVGEAVGAKEGGVVEQPLFNLEVTATPDNIPEAIEVDITELNINDSLTVADVKVTGDFKIENDSAESVVTVVAPTEEPTEEEIEAMEGEQQTEEPEVVGESKEDEEKTEE.

The disordered stretch occupies residues Val178–Glu217. The span at Glu184–Val205 shows a compositional bias: acidic residues. Residues Gly206 to Glu217 show a composition bias toward basic and acidic residues.

This sequence belongs to the bacterial ribosomal protein bL25 family. CTC subfamily. In terms of assembly, part of the 50S ribosomal subunit; part of the 5S rRNA/L5/L18/L25 subcomplex. Contacts the 5S rRNA. Binds to the 5S rRNA independently of L5 and L18.

In terms of biological role, this is one of the proteins that binds to the 5S RNA in the ribosome where it forms part of the central protuberance. The chain is Large ribosomal subunit protein bL25 from Staphylococcus aureus (strain MRSA252).